We begin with the raw amino-acid sequence, 474 residues long: ATP synthase subunit beta 1 (474 aa).

Residue 157–164 participates in ATP binding; the sequence is GGAGVGKT.

Belongs to the ATPase alpha/beta chains family. In terms of assembly, F-type ATPases have 2 components, CF(1) - the catalytic core - and CF(0) - the membrane proton channel. CF(1) has five subunits: alpha(3), beta(3), gamma(1), delta(1), epsilon(1). CF(0) has three main subunits: a(1), b(2) and c(9-12). The alpha and beta chains form an alternating ring which encloses part of the gamma chain. CF(1) is attached to CF(0) by a central stalk formed by the gamma and epsilon chains, while a peripheral stalk is formed by the delta and b chains.

The protein localises to the cell inner membrane. The catalysed reaction is ATP + H2O + 4 H(+)(in) = ADP + phosphate + 5 H(+)(out). Its function is as follows. Produces ATP from ADP in the presence of a proton gradient across the membrane. The catalytic sites are hosted primarily by the beta subunits. In Albidiferax ferrireducens (strain ATCC BAA-621 / DSM 15236 / T118) (Rhodoferax ferrireducens), this protein is ATP synthase subunit beta 1.